We begin with the raw amino-acid sequence, 210 residues long: Pyridoxine/pyridoxamine 5'-phosphate oxidase (210 aa).

Residues 7–10 (REDY) and Lys-65 each bind substrate. FMN-binding positions include 60–65 (RMVLLK), 75–76 (FT), Arg-81, Lys-82, and Gln-104. Substrate-binding residues include Tyr-122, Arg-126, and Ser-130. FMN contacts are provided by residues 139–140 (QS) and Trp-183. 189-191 (RLH) contacts substrate. Residue Arg-193 coordinates FMN.

This sequence belongs to the pyridoxamine 5'-phosphate oxidase family. In terms of assembly, homodimer. FMN is required as a cofactor.

It catalyses the reaction pyridoxamine 5'-phosphate + O2 + H2O = pyridoxal 5'-phosphate + H2O2 + NH4(+). The catalysed reaction is pyridoxine 5'-phosphate + O2 = pyridoxal 5'-phosphate + H2O2. It participates in cofactor metabolism; pyridoxal 5'-phosphate salvage; pyridoxal 5'-phosphate from pyridoxamine 5'-phosphate: step 1/1. It functions in the pathway cofactor metabolism; pyridoxal 5'-phosphate salvage; pyridoxal 5'-phosphate from pyridoxine 5'-phosphate: step 1/1. Catalyzes the oxidation of either pyridoxine 5'-phosphate (PNP) or pyridoxamine 5'-phosphate (PMP) into pyridoxal 5'-phosphate (PLP). This chain is Pyridoxine/pyridoxamine 5'-phosphate oxidase, found in Neisseria meningitidis serogroup B (strain ATCC BAA-335 / MC58).